A 197-amino-acid chain; its full sequence is Holliday junction branch migration complex subunit RuvA (197 aa).

The interval 1–64 is domain I; it reads MIDSIVGIIQ…LSELECYGFL (64 aa). Positions 65 to 143 are domain II; it reads TREERELFLK…KEFKVASTSG (79 aa). The segment at 144-152 is flexible linker; sequence KEEKTYEKL. The interval 152 to 197 is domain III; it reads LEEISLALLSLGYDIDEVNQVLSSEDFSELSLEDGIKLALKKLSKI.

The protein belongs to the RuvA family. Homotetramer. Forms an RuvA(8)-RuvB(12)-Holliday junction (HJ) complex. HJ DNA is sandwiched between 2 RuvA tetramers; dsDNA enters through RuvA and exits via RuvB. An RuvB hexamer assembles on each DNA strand where it exits the tetramer. Each RuvB hexamer is contacted by two RuvA subunits (via domain III) on 2 adjacent RuvB subunits; this complex drives branch migration. In the full resolvosome a probable DNA-RuvA(4)-RuvB(12)-RuvC(2) complex forms which resolves the HJ.

It is found in the cytoplasm. Its function is as follows. The RuvA-RuvB-RuvC complex processes Holliday junction (HJ) DNA during genetic recombination and DNA repair, while the RuvA-RuvB complex plays an important role in the rescue of blocked DNA replication forks via replication fork reversal (RFR). RuvA specifically binds to HJ cruciform DNA, conferring on it an open structure. The RuvB hexamer acts as an ATP-dependent pump, pulling dsDNA into and through the RuvAB complex. HJ branch migration allows RuvC to scan DNA until it finds its consensus sequence, where it cleaves and resolves the cruciform DNA. This chain is Holliday junction branch migration complex subunit RuvA, found in Caldicellulosiruptor bescii (strain ATCC BAA-1888 / DSM 6725 / KCTC 15123 / Z-1320) (Anaerocellum thermophilum).